Reading from the N-terminus, the 472-residue chain is Adenosylhomocysteinase (472 aa).

The substrate site is built by T62, D137, and E197. 198 to 200 (TTT) contributes to the NAD(+) binding site. Residues K227 and D231 each coordinate substrate. NAD(+) contacts are provided by residues N232, 261-266 (GYGDVG), E284, N319, 340-342 (IGH), and N385.

This sequence belongs to the adenosylhomocysteinase family. It depends on NAD(+) as a cofactor.

It localises to the cytoplasm. It catalyses the reaction S-adenosyl-L-homocysteine + H2O = L-homocysteine + adenosine. Its pathway is amino-acid biosynthesis; L-homocysteine biosynthesis; L-homocysteine from S-adenosyl-L-homocysteine: step 1/1. Its function is as follows. May play a key role in the regulation of the intracellular concentration of adenosylhomocysteine. The sequence is that of Adenosylhomocysteinase from Bordetella pertussis (strain Tohama I / ATCC BAA-589 / NCTC 13251).